The chain runs to 670 residues: MDKRFQLVSQFSPAGDQPQAIEQLINGLKSGLAFQTLLGVTGSGKTFTLANAIAKLNRPTLILAPNKTLAAQLYGEMKEFFPNNAVEYFVSYYDYYQPEAYVPSSDSFIEKDAAINAHIEQMRLSATKALLERKDVVLVASVSAIYGLGDPTAYLQMMLHLTVGEIISSREILQRLVDLQYNRNETELSRGTFRVRGEVIDIFPADSEKEALRIELFDDEVEQISVFDPLTGQGIDKLARVTVYPKTHYVTPREQILKAVDAIKVELNERKKEFLEQNKLLEEQRISQRTLYDIEMMNELGYCSGIENYSRYLSGRSEGQAPPTLFDYLPKDALLIIDESHVTVPQIGAMYKGDRSRKENLVNYGFRLPSALDNRPLKFAEFEKIAPQTIYVSATPSDYEINKSQGEIIRQVIRPTGLLDPVIEVRPVTTQVDDLLSEINIRLPLKERVLVTTLTKRMAEDLTDYLHEHGIKARYLHSDVNTVERVEIIRDLRLGIFDVLIGINLLREGLDIPEVSLVAILDADKEGFLRSERSLIQTMGRAARNLNGKAILYAARITGSMQKAIKVTEDRRELQNKFNIENGIIPQGLSKQVNDVMQLGQKNLKKGNLKQGKVAEYKANYQIHSEQDILKQIALSEKQMFACAKNLEFEKAALFRDEVTKLHEQLVSIG.

Positions 26-183 (NGLKSGLAFQ…QRLVDLQYNR (158 aa)) constitute a Helicase ATP-binding domain. ATP is bound at residue 39-46 (GVTGSGKT). Positions 92-115 (YYDYYQPEAYVPSSDSFIEKDAAI) match the Beta-hairpin motif. Positions 431-597 (QVDDLLSEIN…GLSKQVNDVM (167 aa)) constitute a Helicase C-terminal domain. The region spanning 630–665 (LKQIALSEKQMFACAKNLEFEKAALFRDEVTKLHEQ) is the UVR domain.

This sequence belongs to the UvrB family. In terms of assembly, forms a heterotetramer with UvrA during the search for lesions. Interacts with UvrC in an incision complex.

The protein localises to the cytoplasm. In terms of biological role, the UvrABC repair system catalyzes the recognition and processing of DNA lesions. A damage recognition complex composed of 2 UvrA and 2 UvrB subunits scans DNA for abnormalities. Upon binding of the UvrA(2)B(2) complex to a putative damaged site, the DNA wraps around one UvrB monomer. DNA wrap is dependent on ATP binding by UvrB and probably causes local melting of the DNA helix, facilitating insertion of UvrB beta-hairpin between the DNA strands. Then UvrB probes one DNA strand for the presence of a lesion. If a lesion is found the UvrA subunits dissociate and the UvrB-DNA preincision complex is formed. This complex is subsequently bound by UvrC and the second UvrB is released. If no lesion is found, the DNA wraps around the other UvrB subunit that will check the other stand for damage. This Psychromonas ingrahamii (strain DSM 17664 / CCUG 51855 / 37) protein is UvrABC system protein B.